Consider the following 464-residue polypeptide: MGKRLLDKLWERHVVVTNENGLDLLYIDLHLVHEVTSPQAFEGLRLANRTVRRPELTFATMDHNIPTKDVWNITDRIAKQQLDTLRDNCKQFKVRLADIGDEEQGIVHVIGPELGLTQPGKTIVCGDSHTATHGAFGALAFGIGTSEVEHVLATQTLWQRKPKAMGIELKGKLPKGVYAKDIILHLLSKYGVAVGTGHVMEFYGETIRDMGMEERMTLCNMAIEGGAKAGIIAPDEKTFSYVKGREYAPKDYETFTGKWSELYTDSDAIYDLHISVDVTDLAPYVTWGTNPSMGVPIDEKLPEKHNENDERAFSYMGLSPGQSTFEIPVKHVFIGSCTNSRLSDLEIAASVVKGKKVKEGVRALVVPGSKSVRERAMQKGLHRIFEEAGFEWREPGCSMCLGMNPDQVPEGEHCASTSNRNFEGRQGKGARTHLVSPAMAAAAALYGHFVDIRKESYDGTISYS.

Residues cysteine 337, cysteine 397, and cysteine 400 each coordinate [4Fe-4S] cluster.

Belongs to the aconitase/IPM isomerase family. LeuC type 1 subfamily. In terms of assembly, heterodimer of LeuC and LeuD. Requires [4Fe-4S] cluster as cofactor.

It carries out the reaction (2R,3S)-3-isopropylmalate = (2S)-2-isopropylmalate. It participates in amino-acid biosynthesis; L-leucine biosynthesis; L-leucine from 3-methyl-2-oxobutanoate: step 2/4. Its function is as follows. Catalyzes the isomerization between 2-isopropylmalate and 3-isopropylmalate, via the formation of 2-isopropylmaleate. This is 3-isopropylmalate dehydratase large subunit from Bacillus mycoides (strain KBAB4) (Bacillus weihenstephanensis).